The sequence spans 151 residues: Centrin-A (151 aa).

EF-hand domains are found at residues 80 to 115 and 116 to 151; these read DVYA…LGEA and RSDS…KKIY. Ca(2+) is bound by residues aspartate 93, aspartate 95, serine 97, tyrosine 99, aspartate 104, aspartate 129, asparagine 131, aspartate 133, lysine 135, and glutamate 140.

This sequence belongs to the centrin family.

The protein resides in the cytoplasm. It localises to the cytoskeleton. Its subcellular location is the microtubule organizing center. It is found in the centrosome. The protein localises to the nucleus. Plays a fundamental role in microtubule-organizing center structure and function. The chain is Centrin-A (cenA) from Dictyostelium discoideum (Social amoeba).